The following is a 120-amino-acid chain: Large ribosomal subunit protein bL20 (120 aa).

The protein belongs to the bacterial ribosomal protein bL20 family.

Binds directly to 23S ribosomal RNA and is necessary for the in vitro assembly process of the 50S ribosomal subunit. It is not involved in the protein synthesizing functions of that subunit. This Ligilactobacillus salivarius (strain UCC118) (Lactobacillus salivarius) protein is Large ribosomal subunit protein bL20.